The following is a 342-amino-acid chain: Tetraacyldisaccharide 4'-kinase (342 aa).

Position 68–75 (68–75 (TVGGTGKT)) interacts with ATP.

This sequence belongs to the LpxK family.

It carries out the reaction a lipid A disaccharide + ATP = a lipid IVA + ADP + H(+). It functions in the pathway glycolipid biosynthesis; lipid IV(A) biosynthesis; lipid IV(A) from (3R)-3-hydroxytetradecanoyl-[acyl-carrier-protein] and UDP-N-acetyl-alpha-D-glucosamine: step 6/6. Functionally, transfers the gamma-phosphate of ATP to the 4'-position of a tetraacyldisaccharide 1-phosphate intermediate (termed DS-1-P) to form tetraacyldisaccharide 1,4'-bis-phosphate (lipid IVA). The sequence is that of Tetraacyldisaccharide 4'-kinase from Burkholderia cenocepacia (strain ATCC BAA-245 / DSM 16553 / LMG 16656 / NCTC 13227 / J2315 / CF5610) (Burkholderia cepacia (strain J2315)).